A 257-amino-acid chain; its full sequence is Ribosomal RNA small subunit methyltransferase J (257 aa).

Residues 107 to 108 (RD), 123 to 124 (ER), and aspartate 177 each bind S-adenosyl-L-methionine.

Belongs to the methyltransferase superfamily. RsmJ family.

It localises to the cytoplasm. It carries out the reaction guanosine(1516) in 16S rRNA + S-adenosyl-L-methionine = N(2)-methylguanosine(1516) in 16S rRNA + S-adenosyl-L-homocysteine + H(+). In terms of biological role, specifically methylates the guanosine in position 1516 of 16S rRNA. The sequence is that of Ribosomal RNA small subunit methyltransferase J from Haemophilus influenzae (strain PittEE).